A 1402-amino-acid chain; its full sequence is MAMNQEIMNLFNPTTPAQVFDQIRISIASPEKILSWSYGEIKKPETINYRTFKPERDGLFCARIFGPIKDYECLCGKYKRMKYKGIICEKCSVEVTLSRVRRERMGHIELAAPVAHIWFLKSLPSRIGQLLDMTLKDLERILYFEYYVVLEPGLTDLKERQLLSEEEYLRAQDQYGQDSFTAMIGAEAIRELLKGLELEKIDAQLRAEMAETDSDIKHKKLAKRLKIVEAFRYSGNKPEWMILTVVPVIPPDLRPLVPLDGGRFATSDLNDLYRRVINRNNRLKRLMELRAPDIIIRNEKRMLQEAVDALFDNGRRGRVITGANKRPLKSLADMLKGKQGRFRQNLLGKRVDYSGRSVIVVGPELKLHQCGLPKKMALELFKPFIYSRLDAKGLSTTVKQAKKLVEKERPEVWDILDEVIREHPVLLNRAPTLHRLGIQAFEPVLIEGKAIQLHPLVCSAFNADFDGDQMAVHVPLSLEAQLEARVLMMSTNNILHPANGQPIIVPSQDIVLGLYYLSIMREGLPGEGKVFADLAELEHALYSKVIHLHTKIKYRWHWVNEEGENTVRLLETTAGRILLGQVLPKSPKLPFDVINKLMTKREISGVIDQVYRHCGQKETVIFCDRIMALGFFNAFKAGISFGKDDMVVPGSKWKIVDSTRTLAKDFEQQYNDGLITHGEKYNKVVDAWSKATEEIAKEMMKEISAVRKAPDGSEQQVNSIYMMAHSGARGSPAQMRQLAGMRGLMAKPSGEIIETPIISNFKEGLSVLEYFNSTHGARKGLADTALKTANSGYLTRRLVDVAQDCIITQADCGTSLGIKMRAIVDAGTVVASLGSRILGRTAGEDVRDPATNEIIVKRGDLMEERDVEAIHQAGVQEVKIRSALTCELVNGICGKCYGRDLARGTPVNHGEAVGVIAAQSIGEPGTQLTMRTFHIGGAAQINEQSVIESNFDGKIVIKNRAIARNGEGHNVAMVRNMVIAIVDPDGTERATHRIQYGARVHVDEGDMVKRGQRIAEWDPYTRPILTEVEGEIGFEDLIEDQSISETLDESTGIAKRIVIDWRSTRGGADLRPAIVIKGKDGKVLKLARGGDARYMLSVDAILSVDVGAQVKPGDILARISTESAKTRDITGGLPRVAELFEARRPKDAAIIAEIAGTIRFGRDYKNKRRLSIEPLDKNEEAREYLIPKGKHIHLQDGDVVEKGDFIVEGNPAPHDILAIKGIEELAAYLVNEIQEVYRLQGVLINDKHIEVIVRQMLQKIEITDQGDTDMISGEQVDKIEFNALNAKAVEEGKKPATGNPVLLGITKASLQTRSFFSAASFQETTRVLTEAAVNGKVDPLEGLKENVIVGRLIPAGTGASMAKIREVAVKRDRLILDEREKQAAIVPAAAPEAEPLSLPPAE.

Positions 73, 75, 88, and 91 each coordinate Zn(2+). Positions 464, 466, and 468 each coordinate Mg(2+). Zn(2+) contacts are provided by Cys812, Cys886, Cys893, and Cys896.

The protein belongs to the RNA polymerase beta' chain family. As to quaternary structure, the RNAP catalytic core consists of 2 alpha, 1 beta, 1 beta' and 1 omega subunit. When a sigma factor is associated with the core the holoenzyme is formed, which can initiate transcription. The cofactor is Mg(2+). Zn(2+) serves as cofactor.

The enzyme catalyses RNA(n) + a ribonucleoside 5'-triphosphate = RNA(n+1) + diphosphate. Its function is as follows. DNA-dependent RNA polymerase catalyzes the transcription of DNA into RNA using the four ribonucleoside triphosphates as substrates. The chain is DNA-directed RNA polymerase subunit beta' from Rhodopseudomonas palustris (strain ATCC BAA-98 / CGA009).